The following is a 150-amino-acid chain: Large ribosomal subunit protein bL9 (150 aa).

It belongs to the bacterial ribosomal protein bL9 family.

Its function is as follows. Binds to the 23S rRNA. The protein is Large ribosomal subunit protein bL9 of Pectobacterium atrosepticum (strain SCRI 1043 / ATCC BAA-672) (Erwinia carotovora subsp. atroseptica).